Reading from the N-terminus, the 240-residue chain is Sugar fermentation stimulation protein homolog (240 aa).

Belongs to the SfsA family.

The protein is Sugar fermentation stimulation protein homolog of Natranaerobius thermophilus (strain ATCC BAA-1301 / DSM 18059 / JW/NM-WN-LF).